Here is a 105-residue protein sequence, read N- to C-terminus: Insulin-like peptide 7 (105 aa).

Positions 1–18 are cleaved as a signal peptide; it reads MPPIILVFFLVLIPASQQ. Residues 19–57 constitute a propeptide that is removed on maturation; the sequence is YPFSLESLNDQIINEEVIEYMLENSIRSSRTRRVPDEKK. 4 disulfide bridges follow: Cys61/Cys90, Cys73/Cys103, Cys77/Cys104, and Cys89/Cys94.

Belongs to the insulin family.

The protein localises to the secreted. Insulin-like peptide which plays a role in ageing as a consequence of daf-16 activity. In Caenorhabditis elegans, this protein is Insulin-like peptide 7.